We begin with the raw amino-acid sequence, 477 residues long: Tripartite motif-containing protein 72 (477 aa).

Residues C14, C17, C29, H31, C34, C37, C53, C56, C86, H89, C97, D100, C105, C108, H114, and H117 each contribute to the Zn(2+) site. The RING-type zinc finger occupies 14-57 (CPLCLQLFDAPVTAECGHSFCRACLGRVAGEPAADGTVLCPCCQ). A B box-type zinc finger spans residues 81-122 (VPQGHCEEHLDPLSIYCEQDRALVCGVCASLGSHRGHRLLPA). The stretch at 135 to 232 (QQKLQLQEAC…EKVLEEVADK (98 aa)) forms a coiled coil. C144 is modified (S-nitrosocysteine). The residue at position 255 (S255) is a Phosphoserine. One can recognise a B30.2/SPRY domain in the interval 271–475 (DFKFQVWRKM…PLLLVGPEGA (205 aa)).

The protein belongs to the TRIM/RBCC family. In terms of assembly, homodimer. Homooligomer; disulfide-linked. Oligomerizes on the phospholipid membrane. Interacts with DYSF and CAV3. Disulfide bond formation at Cys-242 occurs in case of membrane damage that cause the entry of the oxidized milieu of the extracellular space, resulting in homooligomerization. Post-translationally, S-nitrosylation at Cys-144 stabilizes TRIM72 and protects against oxidation-induced protein degradation and cell death.

Its subcellular location is the cell membrane. It is found in the sarcolemma. It localises to the cytoplasmic vesicle membrane. The catalysed reaction is S-ubiquitinyl-[E2 ubiquitin-conjugating enzyme]-L-cysteine + [acceptor protein]-L-lysine = [E2 ubiquitin-conjugating enzyme]-L-cysteine + N(6)-ubiquitinyl-[acceptor protein]-L-lysine.. It participates in protein modification; protein ubiquitination. With respect to regulation, specifically binds phosphatidylserine. The binding to phospholipids enhances ubiquitination activity. Functionally, muscle-specific E3 ubiquitin-protein ligase that plays a central role in cell membrane repair by nucleating the assembly of the repair machinery at injury sites. Its ubiquitination activity is mediated by E2 ubiquitin-conjugating enzymes UBE2D1, UBE2D2 and UBE2D3. Acts as a sensor of oxidation: upon membrane damage, entry of extracellular oxidative environment results in disulfide bond formation and homooligomerization at the injury site. This oligomerization acts as a nucleation site for recruitment of TRIM72-containing vesicles to the injury site, leading to membrane patch formation. Probably acts upstream of the Ca(2+)-dependent membrane resealing process. Required for transport of DYSF to sites of cell injury during repair patch formation. Regulates membrane budding and exocytosis. May be involved in the regulation of the mobility of KCNB1-containing endocytic vesicles. The protein is Tripartite motif-containing protein 72 of Homo sapiens (Human).